Here is a 602-residue protein sequence, read N- to C-terminus: DNA damage-binding protein CMR1 (602 aa).

The segment at 35 to 85 (KEVDNKSFSSPSSQKRRKTTKKPVIKKEISEPSRRSRRIAGIKSELEDPKQ) is disordered. Residues 48-58 (QKRRKTTKKPV) show a composition bias toward basic residues. Over residues 59–68 (IKKEISEPSR) the composition is skewed to basic and acidic residues. WD repeat units follow at residues 229-270 (ICHN…NDTK), 291-328 (RNVS…STEL), 390-430 (LHDK…KSVY), 446-484 (NSRL…KLDN), 526-569 (GRWV…LAHL), and 571-602 (EQVG…YLFE).

Belongs to the WD repeat DDB2/WDR76 family.

In terms of biological role, DNA-binding protein that binds to both single- and double-stranded DNA. Binds preferentially to UV-damaged DNA. May be involved in DNA-metabolic processes. In Candida albicans (strain SC5314 / ATCC MYA-2876) (Yeast), this protein is DNA damage-binding protein CMR1.